Reading from the N-terminus, the 160-residue chain is 2-C-methyl-D-erythritol 2,4-cyclodiphosphate synthase (160 aa).

2 residues coordinate a divalent metal cation: Asp-8 and His-10. Residues Asp-8–His-10 and His-34–Ser-35 contribute to the 4-CDP-2-C-methyl-D-erythritol 2-phosphate site. Position 42 (His-42) interacts with a divalent metal cation. Residues Asp-56 to Gly-58, Phe-61 to Asp-65, Ala-100 to Leu-106, Thr-132 to Glu-135, Phe-139, and Arg-142 contribute to the 4-CDP-2-C-methyl-D-erythritol 2-phosphate site.

This sequence belongs to the IspF family. In terms of assembly, homotrimer. Requires a divalent metal cation as cofactor.

It carries out the reaction 4-CDP-2-C-methyl-D-erythritol 2-phosphate = 2-C-methyl-D-erythritol 2,4-cyclic diphosphate + CMP. Its pathway is isoprenoid biosynthesis; isopentenyl diphosphate biosynthesis via DXP pathway; isopentenyl diphosphate from 1-deoxy-D-xylulose 5-phosphate: step 4/6. Functionally, involved in the biosynthesis of isopentenyl diphosphate (IPP) and dimethylallyl diphosphate (DMAPP), two major building blocks of isoprenoid compounds. Catalyzes the conversion of 4-diphosphocytidyl-2-C-methyl-D-erythritol 2-phosphate (CDP-ME2P) to 2-C-methyl-D-erythritol 2,4-cyclodiphosphate (ME-CPP) with a corresponding release of cytidine 5-monophosphate (CMP). The chain is 2-C-methyl-D-erythritol 2,4-cyclodiphosphate synthase from Proteus mirabilis (strain HI4320).